A 361-amino-acid chain; its full sequence is Eukaryotic translation initiation factor 3 subunit F (361 aa).

Positions 1–86 (MATPAVPVSA…PAPALPGPAL (86 aa)) are disordered. Position 2 is an N-acetylalanine (A2). Composition is skewed to pro residues over residues 9–20 (SAPPATPAPVPA) and 30–40 (VPAPTPAPAAA). Over residues 41 to 78 (PVPAAAPASSSDPAAAAATTAAPGQTPASAQAPAQTPA) the composition is skewed to low complexity. Residue S50 is modified to Phosphoserine; by CDK11; in vitro. The MPN domain occupies 96–226 (VRLHPVILAS…IKAYVSTLMG (131 aa)). The residue at position 242 (K242) is an N6-acetyllysine. S262 is subject to Phosphoserine.

The protein belongs to the eIF-3 subunit F family. In terms of assembly, component of the eukaryotic translation initiation factor 3 (eIF-3) complex, which is composed of 13 subunits: EIF3A, EIF3B, EIF3C, EIF3D, EIF3E, EIF3F, EIF3G, EIF3H, EIF3I, EIF3J, EIF3K, EIF3L and EIF3M. The eIF-3 complex appears to include 3 stable modules: module A is composed of EIF3A, EIF3B, EIF3G and EIF3I; module B is composed of EIF3F, EIF3H, and EIF3M; and module C is composed of EIF3C, EIF3D, EIF3E, EIF3K and EIF3L. EIF3C of module C binds EIF3B of module A and EIF3H of module B, thereby linking the three modules. EIF3J is a labile subunit that binds to the eIF-3 complex via EIF3B. The eIF-3 complex interacts with RPS6KB1 under conditions of nutrient depletion. Mitogenic stimulation leads to binding and activation of a complex composed of MTOR and RPTOR, leading to phosphorylation and release of RPS6KB1 and binding of EIF4B to eIF-3. Interacts with RNF139; the interaction leads to protein translation inhibitions in a ubiquitination-dependent manner. Interacts with DTX1, the interaction is required for deubiquitinating activity towards NOTCH1. Phosphorylation is enhanced upon serum stimulation. Phosphorylated during apoptosis by caspase-processed CDK11.

The protein localises to the cytoplasm. It catalyses the reaction Thiol-dependent hydrolysis of ester, thioester, amide, peptide and isopeptide bonds formed by the C-terminal Gly of ubiquitin (a 76-residue protein attached to proteins as an intracellular targeting signal).. Its function is as follows. Component of the eukaryotic translation initiation factor 3 (eIF-3) complex, which is required for several steps in the initiation of protein synthesis. The eIF-3 complex associates with the 40S ribosome and facilitates the recruitment of eIF-1, eIF-1A, eIF-2:GTP:methionyl-tRNAi and eIF-5 to form the 43S pre-initiation complex (43S PIC). The eIF-3 complex stimulates mRNA recruitment to the 43S PIC and scanning of the mRNA for AUG recognition. The eIF-3 complex is also required for disassembly and recycling of post-termination ribosomal complexes and subsequently prevents premature joining of the 40S and 60S ribosomal subunits prior to initiation. The eIF-3 complex specifically targets and initiates translation of a subset of mRNAs involved in cell proliferation, including cell cycling, differentiation and apoptosis, and uses different modes of RNA stem-loop binding to exert either translational activation or repression. Functionally, deubiquitinates activated NOTCH1, promoting its nuclear import, thereby acting as a positive regulator of Notch signaling. This Pan troglodytes (Chimpanzee) protein is Eukaryotic translation initiation factor 3 subunit F.